Consider the following 343-residue polypeptide: MQQASPTAIARILDANLNRAREGLRTVEEWCRFALENRELAEECKQLRQALAPWHQDDLRAARDTPNDVGTQLTHAQEALRTDVRALLQANLCRVEEALRVLEEYGKLRDPAMGACCKQLRYRVYALESGLLGSKLVQRLQQCSLYLVTSPQENLLATVEAALQGGLKLVQYRDKDAEDQLRWQRAKDLRELCRQYEALFLVNDRVDLALAVDADGVHLGQQDLPIAVARQLLGPDKIIGRSTTNPEEMAKAIAEGADYIGVGPVYATPTKAGKKPAGLEYVQYAVTNSPVPWFAIGGIDGENLGEVMEAGATQVAIVRAIMETTNPTQATAQLLTQLSRINP.

Residues 1 to 123 (MQQASPTAIA…GACCKQLRYR (123 aa)) form a unknown region. A thiamine-phosphate synthase region spans residues 124 to 343 (VYALESGLLG…LLTQLSRINP (220 aa)). 4-amino-2-methyl-5-(diphosphooxymethyl)pyrimidine-binding positions include 171-175 (QYRDK) and Asn-203. Asp-204 and Asp-223 together coordinate Mg(2+). Ser-242 contacts 4-amino-2-methyl-5-(diphosphooxymethyl)pyrimidine. 268–270 (TPT) lines the 2-[(2R,5Z)-2-carboxy-4-methylthiazol-5(2H)-ylidene]ethyl phosphate pocket. Lys-271 contacts 4-amino-2-methyl-5-(diphosphooxymethyl)pyrimidine. Residue Gly-298 coordinates 2-[(2R,5Z)-2-carboxy-4-methylthiazol-5(2H)-ylidene]ethyl phosphate.

It belongs to the thiamine-phosphate synthase family. The cofactor is Mg(2+).

It carries out the reaction 2-[(2R,5Z)-2-carboxy-4-methylthiazol-5(2H)-ylidene]ethyl phosphate + 4-amino-2-methyl-5-(diphosphooxymethyl)pyrimidine + 2 H(+) = thiamine phosphate + CO2 + diphosphate. It catalyses the reaction 2-(2-carboxy-4-methylthiazol-5-yl)ethyl phosphate + 4-amino-2-methyl-5-(diphosphooxymethyl)pyrimidine + 2 H(+) = thiamine phosphate + CO2 + diphosphate. The enzyme catalyses 4-methyl-5-(2-phosphooxyethyl)-thiazole + 4-amino-2-methyl-5-(diphosphooxymethyl)pyrimidine + H(+) = thiamine phosphate + diphosphate. It functions in the pathway cofactor biosynthesis; thiamine diphosphate biosynthesis; thiamine phosphate from 4-amino-2-methyl-5-diphosphomethylpyrimidine and 4-methyl-5-(2-phosphoethyl)-thiazole: step 1/1. Functionally, condenses 4-methyl-5-(beta-hydroxyethyl)thiazole monophosphate (THZ-P) and 2-methyl-4-amino-5-hydroxymethyl pyrimidine pyrophosphate (HMP-PP) to form thiamine monophosphate (TMP). The protein is Thiamine-phosphate synthase of Synechocystis sp. (strain ATCC 27184 / PCC 6803 / Kazusa).